The chain runs to 227 residues: ATP synthase F(0) complex subunit a (227 aa).

Transmembrane regions (helical) follow at residues 14–34 (YLGIPLIAIAIALPWVLFPLP), 69–89 (WALLLASLMVFLITINMLGLL), 98–118 (QLSLNMGLAIPLWLATVIIGL), 132–152 (EGTPLPLIPVLIIIETISLFI), 179–199 (VFVLLPMMPTVAILTATVLFL), and 202–222 (LLEVAVAMIQAYVFVLLLSLY).

Belongs to the ATPase A chain family. Component of the ATP synthase complex composed at least of ATP5F1A/subunit alpha, ATP5F1B/subunit beta, ATP5MC1/subunit c (homooctomer), MT-ATP6/subunit a, MT-ATP8/subunit 8, ATP5ME/subunit e, ATP5MF/subunit f, ATP5MG/subunit g, ATP5MK/subunit k, ATP5MJ/subunit j, ATP5F1C/subunit gamma, ATP5F1D/subunit delta, ATP5F1E/subunit epsilon, ATP5PF/subunit F6, ATP5PB/subunit b, ATP5PD/subunit d, ATP5PO/subunit OSCP. ATP synthase complex consists of a soluble F(1) head domain (subunits alpha(3) and beta(3)) - the catalytic core - and a membrane F(0) domain - the membrane proton channel (subunits c, a, 8, e, f, g, k and j). These two domains are linked by a central stalk (subunits gamma, delta, and epsilon) rotating inside the F1 region and a stationary peripheral stalk (subunits F6, b, d, and OSCP). Interacts with DNAJC30; interaction is direct.

The protein localises to the mitochondrion inner membrane. It catalyses the reaction H(+)(in) = H(+)(out). Subunit a, of the mitochondrial membrane ATP synthase complex (F(1)F(0) ATP synthase or Complex V) that produces ATP from ADP in the presence of a proton gradient across the membrane which is generated by electron transport complexes of the respiratory chain. ATP synthase complex consist of a soluble F(1) head domain - the catalytic core - and a membrane F(1) domain - the membrane proton channel. These two domains are linked by a central stalk rotating inside the F(1) region and a stationary peripheral stalk. During catalysis, ATP synthesis in the catalytic domain of F(1) is coupled via a rotary mechanism of the central stalk subunits to proton translocation. With the subunit c (ATP5MC1), forms the proton-conducting channel in the F(0) domain, that contains two crucial half-channels (inlet and outlet) that facilitate proton movement from the mitochondrial intermembrane space (IMS) into the matrix. Protons are taken up via the inlet half-channel and released through the outlet half-channel, following a Grotthuss mechanism. This is ATP synthase F(0) complex subunit a from Formosania lacustris (Oriental stream loach).